The primary structure comprises 312 residues: MGNTRKKVSVIGAGFTGATTAFLIAQKELADVVLVDIPQLENPTKGKALDMLEASPVQGFDAKITGTSNYEDTAGSDIVVITAGIARKPGMSRDDLVSTNEKIMRSVTQEIVKYSPDSIIVVLTNPVDAMTYAVYKESGFPKERVIGQSGVLDTARFRTFVAEELNLSVKDVTGFVLGGHGDDMVPLVRYSYAGGIPLETLIPKERIDAIVERTRKGGGEIVNLLGNGSAYYAPAASLTEMVEAILKDQRRVLPTIAYLEGEYGYEGIYLGVPTIVGGNGLEQIIELELTDYERAQLNKSVESVKNVMKVLS.

NAD(+)-binding positions include 12-17 and aspartate 36; that span reads GAGFTG. Substrate is bound by residues arginine 87 and arginine 93. Residues asparagine 100 and 123–125 contribute to the NAD(+) site; that span reads LTN. Asparagine 125 serves as a coordination point for substrate. The residue at position 149 (serine 149) is a Phosphoserine. Substrate is bound at residue arginine 156. Residue histidine 180 is the Proton acceptor of the active site.

The protein belongs to the LDH/MDH superfamily. MDH type 3 family.

The catalysed reaction is (S)-malate + NAD(+) = oxaloacetate + NADH + H(+). Its function is as follows. Catalyzes the reversible oxidation of malate to oxaloacetate. This is Malate dehydrogenase (mdh) from Bacillus subtilis (strain 168).